The primary structure comprises 86 residues: Small ribosomal subunit protein uS17 (86 aa).

Belongs to the universal ribosomal protein uS17 family. In terms of assembly, part of the 30S ribosomal subunit.

Functionally, one of the primary rRNA binding proteins, it binds specifically to the 5'-end of 16S ribosomal RNA. The chain is Small ribosomal subunit protein uS17 from Bifidobacterium adolescentis (strain ATCC 15703 / DSM 20083 / NCTC 11814 / E194a).